The chain runs to 625 residues: tRNA uridine 5-carboxymethylaminomethyl modification enzyme MnmG (625 aa).

Glycine 14–glycine 19 is an FAD binding site. Residue glycine 273–phenylalanine 287 coordinates NAD(+).

This sequence belongs to the MnmG family. In terms of assembly, homodimer. Heterotetramer of two MnmE and two MnmG subunits. The cofactor is FAD.

It is found in the cytoplasm. Its function is as follows. NAD-binding protein involved in the addition of a carboxymethylaminomethyl (cmnm) group at the wobble position (U34) of certain tRNAs, forming tRNA-cmnm(5)s(2)U34. The protein is tRNA uridine 5-carboxymethylaminomethyl modification enzyme MnmG of Clostridium botulinum (strain Loch Maree / Type A3).